The sequence spans 96 residues: Large ribosomal subunit protein uL23 (96 aa).

Belongs to the universal ribosomal protein uL23 family. As to quaternary structure, part of the 50S ribosomal subunit. Contacts protein L29, and trigger factor when it is bound to the ribosome.

In terms of biological role, one of the early assembly proteins it binds 23S rRNA. One of the proteins that surrounds the polypeptide exit tunnel on the outside of the ribosome. Forms the main docking site for trigger factor binding to the ribosome. This is Large ribosomal subunit protein uL23 from Caldanaerobacter subterraneus subsp. tengcongensis (strain DSM 15242 / JCM 11007 / NBRC 100824 / MB4) (Thermoanaerobacter tengcongensis).